The primary structure comprises 176 residues: Ferritin, liver middle subunit (176 aa).

One can recognise a Ferritin-like diiron domain in the interval 7–156 (QNYHRDCEAA…DFITNLSRMD (150 aa)). Fe cation contacts are provided by glutamate 24, glutamate 59, histidine 62, glutamate 104, and glutamine 138.

This sequence belongs to the ferritin family. As to quaternary structure, in liver, forms a heteromer consisting of middle and heavy subunits. The functional molecule forms a roughly spherical shell with a diameter of 12 nm and contains a central cavity into which the insoluble mineral iron core is deposited. In terms of tissue distribution, liver (at protein level).

The catalysed reaction is 4 Fe(2+) + O2 + 4 H(+) = 4 Fe(3+) + 2 H2O. Its function is as follows. Stores iron in a soluble, non-toxic, readily available form. Important for iron homeostasis. Has ferroxidase activity. Iron is taken up in the ferrous form and deposited as ferric hydroxides after oxidation. In Trematomus bernacchii (Emerald rockcod), this protein is Ferritin, liver middle subunit.